Here is a 405-residue protein sequence, read N- to C-terminus: Cytochrome P450 109 (405 aa).

Cys351 serves as a coordination point for heme.

Belongs to the cytochrome P450 family. The cofactor is heme.

In terms of biological role, cytochromes P450 are a group of heme-thiolate monooxygenases. They oxidize a variety of structurally unrelated compounds, including steroids, fatty acids, and xenobiotics. The protein is Cytochrome P450 109 (cyp109) of Bacillus spizizenii (strain ATCC 23059 / NRRL B-14472 / W23) (Bacillus subtilis subsp. spizizenii).